The primary structure comprises 324 residues: Cytochrome f (324 aa).

A signal peptide spans 1 to 30 (MNMRFSPKALVRQLGRLSLVACLSLGLLGA). Heme contacts are provided by Y42, C62, C65, and H66. Residues 290–310 (VLGVIAFFFAVMLAQIMLVLK) form a helical membrane-spanning segment.

Belongs to the cytochrome f family. The 4 large subunits of the cytochrome b6-f complex are cytochrome b6, subunit IV (17 kDa polypeptide, PetD), cytochrome f and the Rieske protein, while the 4 small subunits are PetG, PetL, PetM and PetN. The complex functions as a dimer. It depends on heme as a cofactor.

The protein resides in the cellular thylakoid membrane. In terms of biological role, component of the cytochrome b6-f complex, which mediates electron transfer between photosystem II (PSII) and photosystem I (PSI), cyclic electron flow around PSI, and state transitions. The protein is Cytochrome f of Synechococcus elongatus (strain ATCC 33912 / PCC 7942 / FACHB-805) (Anacystis nidulans R2).